We begin with the raw amino-acid sequence, 38 residues long: MKVRASVKKLCRNCKIIRRDGIVRVICSAEPRHKQRQG.

The protein belongs to the bacterial ribosomal protein bL36 family.

The chain is Large ribosomal subunit protein bL36A from Pseudomonas aeruginosa (strain UCBPP-PA14).